The following is a 406-amino-acid chain: MNKLFVGSEIGQLRRVILHRPERALSHLTPTNCHNLLFDDVLSVEKALLEHDQFVKTLENQGVDVLLLQDLLEQTLENPEAKEWLLKHQISHYRFGPTFANQIRSFLLEHSNKELASILLGGLAFIELPFKAPSMLQQLSDPFDFVIDPLPNHLFTRDTSCWIYGGVSINPMAKAARKRESNHLRAIYRWHPLFSNQDFARYFEDENRYYDNATIEGGDVLVIGKGNVLVGISERTTPQGIENLAKQLFRTHQAKQVIAIKLPEDRSCMHLDTVMTHMDHNVFSVYPRVIDKNMGCWSITPCGEQHLDIKEMPNFQNVLMSALELDNLNIITTGGDSYEAEREQWHDANNVLTIKPGVVVAYERNTYTNEKYDKAGIHVLPITGDELGRGRGGARCMSCPIERDGI.

The active-site Amidino-cysteine intermediate is Cys-396.

The protein belongs to the arginine deiminase family.

The protein localises to the cytoplasm. It carries out the reaction L-arginine + H2O = L-citrulline + NH4(+). It functions in the pathway amino-acid degradation; L-arginine degradation via ADI pathway; carbamoyl phosphate from L-arginine: step 1/2. The polypeptide is Arginine deiminase (Aliivibrio fischeri (strain MJ11) (Vibrio fischeri)).